We begin with the raw amino-acid sequence, 262 residues long: UDP-2,3-diacylglucosamine hydrolase (262 aa).

D10, H12, D47, N86, H121, H218, and H220 together coordinate Mn(2+).

The protein belongs to the LpxH family. Mn(2+) serves as cofactor.

The protein localises to the cell inner membrane. Its subcellular location is the cytoplasm. It carries out the reaction UDP-2-N,3-O-bis[(3R)-3-hydroxytetradecanoyl]-alpha-D-glucosamine + H2O = 2-N,3-O-bis[(3R)-3-hydroxytetradecanoyl]-alpha-D-glucosaminyl 1-phosphate + UMP + 2 H(+). Its pathway is glycolipid biosynthesis; lipid IV(A) biosynthesis; lipid IV(A) from (3R)-3-hydroxytetradecanoyl-[acyl-carrier-protein] and UDP-N-acetyl-alpha-D-glucosamine: step 4/6. In terms of biological role, hydrolyzes the pyrophosphate bond of UDP-2,3-diacylglucosamine to yield 2,3-diacylglucosamine 1-phosphate (lipid X) and UMP by catalyzing the attack of water at the alpha-P atom. Involved in the biosynthesis of lipid A, a phosphorylated glycolipid that anchors the lipopolysaccharide to the outer membrane of the cell. This chain is UDP-2,3-diacylglucosamine hydrolase, found in Porphyromonas gingivalis (strain ATCC BAA-308 / W83).